The following is a 369-amino-acid chain: Glutamate 5-kinase (369 aa).

An ATP-binding site is contributed by lysine 9. Substrate is bound by residues serine 49, aspartate 136, and asparagine 148. ATP is bound by residues 168 to 169 and 210 to 216; these read TD and TGGMLTK. Residues 275–355 enclose the PUA domain; sequence QGEIYVDQGA…KGVVIHRDDW (81 aa).

The protein belongs to the glutamate 5-kinase family.

It is found in the cytoplasm. The catalysed reaction is L-glutamate + ATP = L-glutamyl 5-phosphate + ADP. It functions in the pathway amino-acid biosynthesis; L-proline biosynthesis; L-glutamate 5-semialdehyde from L-glutamate: step 1/2. Catalyzes the transfer of a phosphate group to glutamate to form L-glutamate 5-phosphate. The chain is Glutamate 5-kinase from Streptococcus sanguinis (strain SK36).